The following is a 263-amino-acid chain: Imidazole glycerol phosphate synthase subunit HisF (263 aa).

Active-site residues include aspartate 11 and aspartate 131.

This sequence belongs to the HisA/HisF family. In terms of assembly, heterodimer of HisH and HisF.

It localises to the cytoplasm. The catalysed reaction is 5-[(5-phospho-1-deoxy-D-ribulos-1-ylimino)methylamino]-1-(5-phospho-beta-D-ribosyl)imidazole-4-carboxamide + L-glutamine = D-erythro-1-(imidazol-4-yl)glycerol 3-phosphate + 5-amino-1-(5-phospho-beta-D-ribosyl)imidazole-4-carboxamide + L-glutamate + H(+). Its pathway is amino-acid biosynthesis; L-histidine biosynthesis; L-histidine from 5-phospho-alpha-D-ribose 1-diphosphate: step 5/9. Its function is as follows. IGPS catalyzes the conversion of PRFAR and glutamine to IGP, AICAR and glutamate. The HisF subunit catalyzes the cyclization activity that produces IGP and AICAR from PRFAR using the ammonia provided by the HisH subunit. This Deinococcus geothermalis (strain DSM 11300 / CIP 105573 / AG-3a) protein is Imidazole glycerol phosphate synthase subunit HisF.